The chain runs to 302 residues: Sulfate adenylyltransferase subunit 2 (302 aa).

The protein belongs to the PAPS reductase family. CysD subfamily. As to quaternary structure, heterodimer composed of CysD, the smaller subunit, and CysN.

It catalyses the reaction sulfate + ATP + H(+) = adenosine 5'-phosphosulfate + diphosphate. Its pathway is sulfur metabolism; hydrogen sulfide biosynthesis; sulfite from sulfate: step 1/3. With CysN forms the ATP sulfurylase (ATPS) that catalyzes the adenylation of sulfate producing adenosine 5'-phosphosulfate (APS) and diphosphate, the first enzymatic step in sulfur assimilation pathway. APS synthesis involves the formation of a high-energy phosphoric-sulfuric acid anhydride bond driven by GTP hydrolysis by CysN coupled to ATP hydrolysis by CysD. The chain is Sulfate adenylyltransferase subunit 2 from Xanthomonas euvesicatoria pv. vesicatoria (strain 85-10) (Xanthomonas campestris pv. vesicatoria).